The primary structure comprises 376 residues: Mitogen-activated protein kinase 5 (376 aa).

Residues 43–329 enclose the Protein kinase domain; that stretch reads VPPIRPIGRG…VEEALCYPYL (287 aa). Residues 49 to 57 and K72 contribute to the ATP site; that span reads IGRGAYGFV. D169 functions as the Proton acceptor in the catalytic mechanism. Position 201 is a phosphothreonine (T201). Residues 201 to 203 carry the TXY motif; sequence TEY. Residue Y203 is modified to Phosphotyrosine. Residue T206 is modified to Phosphothreonine.

It belongs to the protein kinase superfamily. CMGC Ser/Thr protein kinase family. MAP kinase subfamily. Autophosphorylated on threonine and tyrosine residues. In terms of processing, dually phosphorylated on Thr-201 and Tyr-203, which activates the enzyme.

The enzyme catalyses L-seryl-[protein] + ATP = O-phospho-L-seryl-[protein] + ADP + H(+). The catalysed reaction is L-threonyl-[protein] + ATP = O-phospho-L-threonyl-[protein] + ADP + H(+). With respect to regulation, activated by threonine and tyrosine phosphorylation. Activated by the MAP kinase kinase MKK2. Activated by the MAP kinase kinase MKK6 in vitro. The chain is Mitogen-activated protein kinase 5 (MPK5) from Arabidopsis thaliana (Mouse-ear cress).